Here is a 155-residue protein sequence, read N- to C-terminus: Transcriptional repressor NrdR (155 aa).

A zinc finger lies at 3-34 (CPFCSHFESKVVDSRPTDEGQAIRRRRECVSC). The region spanning 49-139 (LIVVKKSGNR…VYREFKDINT (91 aa)) is the ATP-cone domain.

The protein belongs to the NrdR family. Zn(2+) is required as a cofactor.

Functionally, negatively regulates transcription of bacterial ribonucleotide reductase nrd genes and operons by binding to NrdR-boxes. This Alkaliphilus metalliredigens (strain QYMF) protein is Transcriptional repressor NrdR.